Here is a 298-residue protein sequence, read N- to C-terminus: Phosphatidylglycerol--prolipoprotein diacylglyceryl transferase (298 aa).

7 helical membrane-spanning segments follow: residues 17–37 (LAVRWYGLMYLVGFIAAIVVG), 59–79 (MMFYGVLGTVLGGRLGYVLFY), 97–117 (GGMSFHGGFLGVTLAMMLFAW), 129–149 (FVAPMVPLGLAAGRLGNFING), 204–224 (SQLYEIALEGIALFFVLFLFA), 230–250 (MGAISALFLIGYGLARFTVEF), and 257–277 (FLGLLALGLSMGQWLSLPMIL). An a 1,2-diacyl-sn-glycero-3-phospho-(1'-sn-glycerol)-binding site is contributed by R142.

The protein belongs to the Lgt family.

It localises to the cell inner membrane. It carries out the reaction L-cysteinyl-[prolipoprotein] + a 1,2-diacyl-sn-glycero-3-phospho-(1'-sn-glycerol) = an S-1,2-diacyl-sn-glyceryl-L-cysteinyl-[prolipoprotein] + sn-glycerol 1-phosphate + H(+). The protein operates within protein modification; lipoprotein biosynthesis (diacylglyceryl transfer). Functionally, catalyzes the transfer of the diacylglyceryl group from phosphatidylglycerol to the sulfhydryl group of the N-terminal cysteine of a prolipoprotein, the first step in the formation of mature lipoproteins. The polypeptide is Phosphatidylglycerol--prolipoprotein diacylglyceryl transferase (Burkholderia orbicola (strain MC0-3)).